The sequence spans 270 residues: Formamidopyrimidine-DNA glycosylase (270 aa).

Residue proline 2 is the Schiff-base intermediate with DNA of the active site. Catalysis depends on glutamate 3, which acts as the Proton donor. The Proton donor; for beta-elimination activity role is filled by lysine 58. DNA is bound by residues histidine 91, arginine 110, and arginine 151. An FPG-type zinc finger spans residues 236-270 (FVYGRGGQPCKVCGTELREVKLGQRASVYCPRCQR). Arginine 260 functions as the Proton donor; for delta-elimination activity in the catalytic mechanism.

This sequence belongs to the FPG family. Monomer. Zn(2+) is required as a cofactor.

It catalyses the reaction Hydrolysis of DNA containing ring-opened 7-methylguanine residues, releasing 2,6-diamino-4-hydroxy-5-(N-methyl)formamidopyrimidine.. The enzyme catalyses 2'-deoxyribonucleotide-(2'-deoxyribose 5'-phosphate)-2'-deoxyribonucleotide-DNA = a 3'-end 2'-deoxyribonucleotide-(2,3-dehydro-2,3-deoxyribose 5'-phosphate)-DNA + a 5'-end 5'-phospho-2'-deoxyribonucleoside-DNA + H(+). Involved in base excision repair of DNA damaged by oxidation or by mutagenic agents. Acts as a DNA glycosylase that recognizes and removes damaged bases. Has a preference for oxidized purines, such as 7,8-dihydro-8-oxoguanine (8-oxoG). Has AP (apurinic/apyrimidinic) lyase activity and introduces nicks in the DNA strand. Cleaves the DNA backbone by beta-delta elimination to generate a single-strand break at the site of the removed base with both 3'- and 5'-phosphates. The sequence is that of Formamidopyrimidine-DNA glycosylase from Pseudomonas putida (strain ATCC 700007 / DSM 6899 / JCM 31910 / BCRC 17059 / LMG 24140 / F1).